The following is a 324-amino-acid chain: Phthalate 4,5-dioxygenase oxygenase reductase subunit (324 aa).

An FAD-binding FR-type domain is found at 9-111 (DGFTGLKVIA…ATPQNEFELI (103 aa)). 115 to 229 (RQFIFVAGGI…PGSIHFESFG (115 aa)) provides a ligand contact to NAD(+). Positions 241-324 (FSVTLGRSGI…ARNDVLVLDL (84 aa)) constitute a 2Fe-2S ferredoxin-type domain. The [2Fe-2S] cluster site is built by Cys275, Cys280, Cys283, and Cys311.

It belongs to the PDR/VanB family. This dioxygenase system consists of two proteins: phthalate oxygenase and phthalate oxygenase reductase. Requires FMN as cofactor.

The enzyme catalyses phthalate + NADH + O2 + H(+) = cis-4,5-dihydroxycyclohexa-2,6-diene-1,2-dicarboxylate + NAD(+). It participates in xenobiotic degradation; phthalate degradation; 3,4-dihydroxybenzoate from phthalate: step 1/3. The polypeptide is Phthalate 4,5-dioxygenase oxygenase reductase subunit (pht2) (Pseudomonas putida (Arthrobacter siderocapsulatus)).